The following is a 138-amino-acid chain: Large ribosomal subunit protein uL16 (138 aa).

It belongs to the universal ribosomal protein uL16 family. In terms of assembly, part of the 50S ribosomal subunit.

Its function is as follows. Binds 23S rRNA and is also seen to make contacts with the A and possibly P site tRNAs. This chain is Large ribosomal subunit protein uL16, found in Anaeromyxobacter dehalogenans (strain 2CP-C).